Reading from the N-terminus, the 850-residue chain is Rho guanine nucleotide exchange factor 33 (850 aa).

Basic and acidic residues-rich tracts occupy residues 1-13 (MEKSKAKQGENEH) and 98-113 (EEMQQKIEQLQQEKRR). 2 disordered regions span residues 1–21 (MEKSKAKQGENEHMPVNNPST) and 98–209 (EEMQ…DENL). Residues 54 to 128 (LEEKVKSCRC…KAKKAQKEEH (75 aa)) adopt a coiled-coil conformation. The span at 130–149 (AQAGPASAPAPGSAPTQGSP) shows a compositional bias: low complexity. Polar residues predominate over residues 164–175 (DFTNMLPSQNYE). Residues 273–448 (KRQTVALELL…RVFISHYTLL (176 aa)) enclose the DH domain. Disordered stretches follow at residues 504 to 550 (EMLQ…WELE) and 702 to 850 (AAQA…WGWW). 2 stretches are compositionally biased toward low complexity: residues 510–520 (PSSSSSAPAVS) and 754–770 (APHGPAAAAAASRGAPR). R766 carries the omega-N-methylarginine modification. Residues 773-783 (FPQQRSQSEKQ) show a composition bias toward polar residues. Positions 784-806 (TYLEEMHLEDATRFCPKEERESE) are enriched in basic and acidic residues. The span at 826–835 (SFRKLFKKKN) shows a compositional bias: basic residues.

The chain is Rho guanine nucleotide exchange factor 33 (Arhgef33) from Mus musculus (Mouse).